A 145-amino-acid chain; its full sequence is Putative nickel-responsive regulator (145 aa).

Histidine 77, histidine 88, histidine 90, and cysteine 96 together coordinate Ni(2+).

The protein belongs to the transcriptional regulatory CopG/NikR family. Ni(2+) serves as cofactor.

Functionally, transcriptional regulator. The protein is Putative nickel-responsive regulator of Rhizobium rhizogenes (strain K84 / ATCC BAA-868) (Agrobacterium radiobacter).